The following is a 294-amino-acid chain: Probable enoyl-CoA hydratase 2 (294 aa).

(3R)-3-hydroxydecanoyl-CoA-binding positions include 84–85, K113, 190–195, G213, and F243; these read HG and DLNPLH. Residues 165–269 form the MaoC-like domain; sequence DRAPDAISKQ…INPTTILFQS (105 aa). A Microbody targeting signal motif is present at residues 292–294; it reads GSL.

Belongs to the short-chain dehydrogenases/reductases (SDR) family.

Its subcellular location is the peroxisome. It carries out the reaction a (3R)-3-hydroxyacyl-CoA = a (2E)-enoyl-CoA + H2O. This Dictyostelium discoideum (Social amoeba) protein is Probable enoyl-CoA hydratase 2 (mfeB).